Consider the following 496-residue polypeptide: Thiamine transporter 2 (496 aa).

The Cytoplasmic portion of the chain corresponds to 1–7; sequence MDCYRTS. A helical membrane pass occupies residues 8–28; it reads LSSSWIYPTVILCLFGFFSMM. The Extracellular portion of the chain corresponds to 29-53; it reads RPSEPFLIPYLSGPDKNLTSAEITN. Asn45 carries N-linked (GlcNAc...) asparagine glycosylation. Residues 54–74 traverse the membrane as a helical segment; it reads EIFPVWTYSYLVLLLPVFVLT. Topologically, residues 75–81 are cytoplasmic; it reads DYVRYKP. Residues 82-102 form a helical membrane-spanning segment; the sequence is VIILQGISFIITWLLLLFGQG. At 103 to 110 the chain is on the extracellular side; sequence VKTMQVVE. Residues 111–131 form a helical membrane-spanning segment; that stretch reads FFYGMVTAAEVAYYAYIYSVV. Over 132–144 the chain is Cytoplasmic; it reads SPEHYQRVSGYCR. Residues 145-165 form a helical membrane-spanning segment; the sequence is SVTLAAYTAGSVLAQLLVSLA. An N-linked (GlcNAc...) asparagine glycan is attached at Asn166. At 166–169 the chain is on the extracellular side; that stretch reads NMSY. Residues 170-190 traverse the membrane as a helical segment; it reads FYLNVISLASVSVAFLFSLFL. At 191–282 the chain is on the cytoplasmic side; that stretch reads PMPKKSMFFH…YSSKRLFYWS (92 aa). Residues 283 to 303 form a helical membrane-spanning segment; it reads LWWAFATAGFNQVLNYVQILW. At 304–316 the chain is on the extracellular side; that stretch reads DYKAPSQDSSIYN. A helical membrane pass occupies residues 317 to 337; sequence GAVEAIATFGGAVAAFAVGYV. Residues 338 to 342 lie on the Cytoplasmic side of the membrane; sequence KVNWD. A helical membrane pass occupies residues 343–363; the sequence is LLGELALVVFSVVNAGSLFLM. Residues 364–375 lie on the Extracellular side of the membrane; sequence HYTANIWACYAG. A helical membrane pass occupies residues 376-396; that stretch reads YLIFKSSYMLLITIAVFQIAV. Residues 397 to 405 are Cytoplasmic-facing; sequence NLNVERYAL. Residues 406–426 traverse the membrane as a helical segment; sequence VFGINTFIALVIQTIMTVIVV. The Extracellular portion of the chain corresponds to 427-434; that stretch reads DQRGLNLP. A helical membrane pass occupies residues 435 to 455; the sequence is VSIQFLVYGSYFAVIAGIFLM. The Cytoplasmic portion of the chain corresponds to 456–496; it reads RSMYITYSTKSQKDVQSPAPSENPDVSHPEEESNIIMSTKL. A disordered region spans residues 468 to 496; it reads KDVQSPAPSENPDVSHPEEESNIIMSTKL.

Belongs to the reduced folate carrier (RFC) transporter (TC 2.A.48) family. In terms of tissue distribution, widely expressed but most abundant in placenta, kidney and liver.

The protein localises to the membrane. It catalyses the reaction thiamine(out) + H(+)(in) = thiamine(in) + H(+)(out). The catalysed reaction is pyridoxine(out) + n H(+)(out) = pyridoxine(in) + n H(+)(in). Pyridoxine transport is inhibited by carbonyl cyanide p-trifluoromethoxyphenylhydrazone (FCCP) and carbonyl cyanide m-chlorophenylhydrazone (CCCP). Functionally, mediates high affinity thiamine uptake, probably via a proton anti-port mechanism. Has no folate transport activity. Mediates H(+)-dependent pyridoxine transport. The protein is Thiamine transporter 2 (SLC19A3) of Homo sapiens (Human).